The following is a 103-amino-acid chain: Large ribosomal subunit protein bL21 (103 aa).

This sequence belongs to the bacterial ribosomal protein bL21 family. As to quaternary structure, part of the 50S ribosomal subunit. Contacts protein L20.

This protein binds to 23S rRNA in the presence of protein L20. The protein is Large ribosomal subunit protein bL21 of Mycobacterium tuberculosis (strain ATCC 25618 / H37Rv).